We begin with the raw amino-acid sequence, 174 residues long: Recombination protein RecR (174 aa).

Residues C30–C45 form a C4-type zinc finger. In terms of domain architecture, Toprim spans G54–P149.

This sequence belongs to the RecR family.

May play a role in DNA repair. It seems to be involved in an RecBC-independent recombinational process of DNA repair. It may act with RecF and RecO. The polypeptide is Recombination protein RecR (Haemophilus ducreyi (strain 35000HP / ATCC 700724)).